The primary structure comprises 332 residues: Melanocortin receptor 4 (332 aa).

Over 1–43 the chain is Extracellular; the sequence is MNSTLQHGMHTSLHFWNRSTYGQHSNATESLGKGYPDGGCYEQ. N-linked (GlcNAc...) asparagine glycans are attached at residues Asn-2, Asn-17, and Asn-26. 2 cysteine pairs are disulfide-bonded: Cys-40–Cys-279 and Cys-271–Cys-277. The helical transmembrane segment at 44–69 threads the bilayer; sequence LFVSPEVFVTLGVISLLENILVIVAI. At 70 to 81 the chain is on the cytoplasmic side; it reads AKNKNLHSPMYF. The chain crosses the membrane as a helical span at residues 82–106; sequence FICSLAVADMLVSVSNGSETIVITL. Glu-100, Asp-122, and Asp-126 together coordinate Ca(2+). At 107-123 the chain is on the extracellular side; the sequence is LNSTDTDAQSFTVNIDN. A helical transmembrane segment spans residues 124-145; that stretch reads VIDSVICSSLLASICSLLSIAV. The Cytoplasmic segment spans residues 146 to 165; it reads DRYFTIFYALQYHNIMTVRR. Residues 166-186 traverse the membrane as a helical segment; it reads VGIIISCIWAACTVSGILFII. Topologically, residues 187 to 191 are extracellular; the sequence is YSDST. A helical membrane pass occupies residues 192 to 215; sequence AVIICLITMFFTMLALMASLYVHM. Over 216–248 the chain is Cytoplasmic; it reads FLMARLHIKRIAVLPGTGTIRQGANMKGAITLT. The chain crosses the membrane as a helical span at residues 249–271; sequence ILIGVFVVCWAPFFLHLIFYISC. Residues 272-280 lie on the Extracellular side of the membrane; sequence PQNPYCVCF. The chain crosses the membrane as a helical span at residues 281 to 304; that stretch reads MSHFNLYLILIMCNSIIDPLIYAL. Residues 305 to 332 are Cytoplasmic-facing; the sequence is RSQELRKTFKEIICCYPLGGLCDLSSRY. Residue Cys-318 is the site of S-palmitoyl cysteine attachment.

It belongs to the G-protein coupled receptor 1 family. As to quaternary structure, homodimer; disulfide-linked, also forms higher order oligomers. Interacts with GNAS. Interacts with ATRNL1. Interacts with MGRN1; this interaction competes with GNAS-binding and thus inhibits agonist-induced cAMP production. Interacts with MRAP and MRAP2; these associated factors increase ligand-sensitivity and generation of cAMP.

Its subcellular location is the cell membrane. Its function is as follows. Hormone receptor that acts as a key component of the leptin-melanocortin pathway at the intersection of homeostatic maintenance of energetic state. Plays a role in regulating food intake: activation by a stimulating hormone such as anorexigenic alpha-melanocyte stimulating hormone (alpha-MSH) inhibits appetite, whereas binding to a natural antagonist like Agouti-related protein/AGRP promotes appetite. G-protein-coupled receptor that activates conventional Galphas signaling leading to induction of anorexogenic signaling in the hypothalamus to result in negative energy balance. Regulates the firing activity of neurons from the hypothalamus by alpha-MSH and AGRP independently of Galphas signaling by ligand-induced coupling of closure of inwardly rectifying potassium channel KCNJ13. In intestinal epithelial cells, plays a role in the inhibition of hepatic glucose production via nesfatin-1/NUCB2 leading to increased cyclic adenosine monophosphate (cAMP) levels and glucagon-like peptide 1 (GLP-1) secretion in the intestinal epithelium. The protein is Melanocortin receptor 4 (MC4R) of Vulpes vulpes (Red fox).